The chain runs to 424 residues: MEKALLEIEEKARLAKAASRPLSYASSAQKDAALKNIAACLLNNAPAILEANLKDQTEAKAAGMTAAMLDRLIITQSRLEGIAKDTLAIAALPDPVGEIFDMNTMPNGLVIGKKRVPLGVIAAIYESRPNVTVDIAALCLKAGNAVILRGGKETIHSNTILARLIRQAVEEAGLPQEAVQFIENTEHSLVNHLLKLSDQIDLVIPRGGAGLISYVKQNSFIPVVAGGIGVVHIYVDADANIADAVNIAYNSKVQRPTVCNAMDTLLVHKDIAAAFLPVVAAEWSKAGVEIRADKTAMEILENASSCKLIPAAADDWGKEFLALVAAVKVVDSLDEALSHIARYGSGHTESIVTQNYTSSQRFLNEVDAAAVMVNASTRFTDGSQFGLGAELGISTQKMHARGPMGLKEITSYKWIVYGNGQIRG.

This sequence belongs to the gamma-glutamyl phosphate reductase family.

The protein localises to the cytoplasm. The enzyme catalyses L-glutamate 5-semialdehyde + phosphate + NADP(+) = L-glutamyl 5-phosphate + NADPH + H(+). The protein operates within amino-acid biosynthesis; L-proline biosynthesis; L-glutamate 5-semialdehyde from L-glutamate: step 2/2. Functionally, catalyzes the NADPH-dependent reduction of L-glutamate 5-phosphate into L-glutamate 5-semialdehyde and phosphate. The product spontaneously undergoes cyclization to form 1-pyrroline-5-carboxylate. This chain is Gamma-glutamyl phosphate reductase, found in Dehalococcoides mccartyi (strain ATCC BAA-2266 / KCTC 15142 / 195) (Dehalococcoides ethenogenes (strain 195)).